The sequence spans 98 residues: MANFVLNAQARAEDKQGKGASRRLRRESLVPAIIYGGNAEPVAVTLELRELVKALESNAFFEEVVEIKVGDKVENVKIQALQRHPAKNTPMHADFKRA.

The disordered stretch occupies residues 1 to 23 (MANFVLNAQARAEDKQGKGASRR).

The protein belongs to the bacterial ribosomal protein bL25 family. As to quaternary structure, part of the 50S ribosomal subunit; part of the 5S rRNA/L5/L18/L25 subcomplex. Contacts the 5S rRNA. Binds to the 5S rRNA independently of L5 and L18.

Functionally, this is one of the proteins that binds to the 5S RNA in the ribosome where it forms part of the central protuberance. The sequence is that of Large ribosomal subunit protein bL25 from Acinetobacter baumannii (strain ATCC 17978 / DSM 105126 / CIP 53.77 / LMG 1025 / NCDC KC755 / 5377).